Reading from the N-terminus, the 540-residue chain is MTTPAGSGRGFGSVSWWGLSPALDLQAESPPVDPDSQADTVHSTPELDVLLLGSVDGRHLLRTLSRAKLWPRRRFNFFALENNLEAVARHMLIFSLALEDPEKMGLQERSETFLEVWGNALLRPPVAAFVRAQADLLAHLVPEPDRLEEQLPWLSLRALKFRERDALEAVFRFWAGGEKGPEAFPMSRLWDSRLRHYLGSRYDARHGVSDWDLRMKLHDRGAQVIHTQEFRRWRDTGVAFELRDSSAYHVPNRTLASGRLLSYRGERVAARGYWGDIATGPFVAFGIEADDESLLRTSNGQPVKTAGEITQHNVTELLREVAAWGRARASRGHPEEQQRSEASPEPGTPASTPESFTVHFLPLNSAETLHHKSCYNGRFQLLYVACGVVHLLSPELGACVAPGGNLIVELARYLVDMRQEQLQGFNTQVGERAQAAGFAPQTGARPSETFARFCKSQDSALGSTDPAVEPGTPSLDVLAQPLEASSPAPEGLTQPLQGGTPHWEPCQLPSESPGSLSEVLAQPQGALALSNCESHSNTGV.

Disordered regions lie at residues 328 to 355 (RASR…TPES) and 485 to 522 (SSPA…VLAQ).

It belongs to the DNAAF3 family.

The protein resides in the cytoplasm. Its subcellular location is the dynein axonemal particle. Functionally, required for the assembly of axonemal inner and outer dynein arms. Involved in preassembly of dyneins into complexes before their transport into cilia. The polypeptide is Dynein axonemal assembly factor 3 (DNAAF3) (Macaca fascicularis (Crab-eating macaque)).